The primary structure comprises 901 residues: Probable inorganic carbon transporter subunit DabA (901 aa).

Residues Cys424, Asp426, His606, and Cys621 each contribute to the Zn(2+) site.

This sequence belongs to the inorganic carbon transporter (TC 9.A.2) DabA family. In terms of assembly, forms a complex with DabB. Zn(2+) serves as cofactor.

It localises to the cell membrane. Functionally, part of an energy-coupled inorganic carbon pump. The polypeptide is Probable inorganic carbon transporter subunit DabA (Staphylococcus aureus (strain bovine RF122 / ET3-1)).